We begin with the raw amino-acid sequence, 148 residues long: Putative nickel-responsive regulator (148 aa).

Ni(2+) contacts are provided by His-88, His-99, His-101, and Cys-107.

Belongs to the transcriptional regulatory CopG/NikR family. The cofactor is Ni(2+).

Transcriptional regulator. The sequence is that of Putative nickel-responsive regulator from Helicobacter pylori (strain G27).